We begin with the raw amino-acid sequence, 199 residues long: NAD(P)H dehydrogenase (quinone) (199 aa).

The Flavodoxin-like domain maps to 4–190 (VLVLYYSTYG…DGARYQGRHV (187 aa)). FMN is bound by residues 10–15 (STYGHI) and 78–80 (TRY). Y12 contacts NAD(+). Substrate is bound at residue W98. FMN is bound by residues 113 to 119 (SSASQHG) and H134.

The protein belongs to the WrbA family. Requires FMN as cofactor.

The enzyme catalyses a quinone + NADH + H(+) = a quinol + NAD(+). It carries out the reaction a quinone + NADPH + H(+) = a quinol + NADP(+). The sequence is that of NAD(P)H dehydrogenase (quinone) from Methylobacterium sp. (strain 4-46).